Reading from the N-terminus, the 338-residue chain is Beta-ketoacyl-[acyl-carrier-protein] synthase III (338 aa).

Catalysis depends on residues Cys-119 and His-261. Residues 262-266 (QANQR) form an ACP-binding region. The active site involves Asn-291.

Belongs to the thiolase-like superfamily. FabH family. In terms of assembly, homodimer.

It localises to the cytoplasm. It catalyses the reaction malonyl-[ACP] + acetyl-CoA + H(+) = 3-oxobutanoyl-[ACP] + CO2 + CoA. It functions in the pathway lipid metabolism; fatty acid biosynthesis. Functionally, catalyzes the condensation reaction of fatty acid synthesis by the addition to an acyl acceptor of two carbons from malonyl-ACP. Catalyzes the first condensation reaction which initiates fatty acid synthesis and may therefore play a role in governing the total rate of fatty acid production. Possesses both acetoacetyl-ACP synthase and acetyl transacylase activities. Its substrate specificity determines the biosynthesis of branched-chain and/or straight-chain of fatty acids. This chain is Beta-ketoacyl-[acyl-carrier-protein] synthase III, found in Prochlorococcus marinus (strain NATL2A).